We begin with the raw amino-acid sequence, 333 residues long: Casein kinase II subunit beta-1 (333 aa).

Acidic residues predominate over residues 58–78 (VEPEDDDDEEEEDEEDEEDMS). Disordered stretches follow at residues 58–92 (VEPE…ERRH) and 282–333 (ARRY…ESEL). Residues 305–316 (ASRRRGPPRRQK) show a composition bias toward basic residues.

The protein belongs to the casein kinase 2 subunit beta family. Tetramer composed of two alpha chains, one beta chain and one beta' chain. Phosphorylated by alpha subunit.

In terms of biological role, regulatory subunit of casein kinase II/CK2. As part of the kinase complex regulates the basal catalytic activity of the alpha subunit a constitutively active serine/threonine-protein kinase that phosphorylates a large number of substrates containing acidic residues C-terminal to the phosphorylated serine or threonine. This Neurospora crassa (strain ATCC 24698 / 74-OR23-1A / CBS 708.71 / DSM 1257 / FGSC 987) protein is Casein kinase II subunit beta-1 (ckb-1).